Here is a 159-residue protein sequence, read N- to C-terminus: MDATFWAFIALVIFVAIVVYMKVPGMIGRTLDERADRIKKELEEARTLREEAQQLLAEYHRKCKEAEKEAGDIVASAEREAKALLEEAKRATEEYVARRNKLAEQKIATAETDAINAVRASAVDLAVAAAGSILAEKVDAKAAGNLFNDALAQVKSHLN.

Residues 1–21 (MDATFWAFIALVIFVAIVVYM) form a helical membrane-spanning segment.

This sequence belongs to the ATPase B chain family. As to quaternary structure, F-type ATPases have 2 components, F(1) - the catalytic core - and F(0) - the membrane proton channel. F(1) has five subunits: alpha(3), beta(3), gamma(1), delta(1), epsilon(1). F(0) has three main subunits: a(1), b(2) and c(10-14). The alpha and beta chains form an alternating ring which encloses part of the gamma chain. F(1) is attached to F(0) by a central stalk formed by the gamma and epsilon chains, while a peripheral stalk is formed by the delta and b chains.

It localises to the cell inner membrane. Its function is as follows. F(1)F(0) ATP synthase produces ATP from ADP in the presence of a proton or sodium gradient. F-type ATPases consist of two structural domains, F(1) containing the extramembraneous catalytic core and F(0) containing the membrane proton channel, linked together by a central stalk and a peripheral stalk. During catalysis, ATP synthesis in the catalytic domain of F(1) is coupled via a rotary mechanism of the central stalk subunits to proton translocation. Functionally, component of the F(0) channel, it forms part of the peripheral stalk, linking F(1) to F(0). The chain is ATP synthase subunit b 2 from Brucella ovis (strain ATCC 25840 / 63/290 / NCTC 10512).